The chain runs to 202 residues: Glycerol-3-phosphate acyltransferase (202 aa).

5 consecutive transmembrane segments (helical) span residues 6–26 (LTLG…AVLV), 56–76 (SAAL…YIAF), 82–102 (SVSL…PIFF), 118–138 (APIG…MVLI), and 141–161 (YSSL…WYLD).

This sequence belongs to the PlsY family. Probably interacts with PlsX.

Its subcellular location is the cell inner membrane. It catalyses the reaction an acyl phosphate + sn-glycerol 3-phosphate = a 1-acyl-sn-glycero-3-phosphate + phosphate. Its pathway is lipid metabolism; phospholipid metabolism. Catalyzes the transfer of an acyl group from acyl-phosphate (acyl-PO(4)) to glycerol-3-phosphate (G3P) to form lysophosphatidic acid (LPA). This enzyme utilizes acyl-phosphate as fatty acyl donor, but not acyl-CoA or acyl-ACP. The sequence is that of Glycerol-3-phosphate acyltransferase from Shewanella woodyi (strain ATCC 51908 / MS32).